Here is a 489-residue protein sequence, read N- to C-terminus: Diaminopimelate decarboxylase 2, chloroplastic (489 aa).

A chloroplast-targeting transit peptide spans 1-50; the sequence is MAAVTQFLSQPSSIRGTLNQYQLNQTSLSRIPFLSLKSTLKPLKRLSVKA. N-acetylalanine is present on A51. Position 130 is an N6-(pyridoxal phosphate)lysine (K130). Pyridoxal 5'-phosphate-binding positions include G309 and 345–348; that span reads EPGR. Substrate-binding residues include R348, R384, and Y388. The active-site Proton donor is C416. 2 residues coordinate substrate: E417 and Y445. Y445 lines the pyridoxal 5'-phosphate pocket.

This sequence belongs to the Orn/Lys/Arg decarboxylase class-II family. LysA subfamily. In terms of assembly, homodimer. Pyridoxal 5'-phosphate serves as cofactor.

Its subcellular location is the plastid. The protein localises to the chloroplast. The enzyme catalyses meso-2,6-diaminopimelate + H(+) = L-lysine + CO2. It participates in amino-acid biosynthesis; L-lysine biosynthesis via DAP pathway; L-lysine from DL-2,6-diaminopimelate: step 1/1. In terms of biological role, specifically catalyzes the decarboxylation of meso-diaminopimelate (meso-DAP) to L-lysine. This chain is Diaminopimelate decarboxylase 2, chloroplastic (LYSA2), found in Arabidopsis thaliana (Mouse-ear cress).